Reading from the N-terminus, the 435-residue chain is Methylenetetrahydrofolate--tRNA-(uracil-5-)-methyltransferase TrmFO (435 aa).

9-14 (GGGLAG) serves as a coordination point for FAD.

The protein belongs to the MnmG family. TrmFO subfamily. The cofactor is FAD.

The protein localises to the cytoplasm. The catalysed reaction is uridine(54) in tRNA + (6R)-5,10-methylene-5,6,7,8-tetrahydrofolate + NADH + H(+) = 5-methyluridine(54) in tRNA + (6S)-5,6,7,8-tetrahydrofolate + NAD(+). It carries out the reaction uridine(54) in tRNA + (6R)-5,10-methylene-5,6,7,8-tetrahydrofolate + NADPH + H(+) = 5-methyluridine(54) in tRNA + (6S)-5,6,7,8-tetrahydrofolate + NADP(+). Functionally, catalyzes the folate-dependent formation of 5-methyl-uridine at position 54 (M-5-U54) in all tRNAs. The sequence is that of Methylenetetrahydrofolate--tRNA-(uracil-5-)-methyltransferase TrmFO from Citrifermentans bemidjiense (strain ATCC BAA-1014 / DSM 16622 / JCM 12645 / Bem) (Geobacter bemidjiensis).